A 563-amino-acid polypeptide reads, in one-letter code: Heat shock 70 kDa protein 8 (563 aa).

The disordered stretch occupies residues 1–25 (MAEAAYTVASDSENTGEEKSSSSPS). An N-acetylalanine modification is found at Ala2.

The protein belongs to the heat shock protein 70 (TC 1.A.33) family. DnaK subfamily.

In terms of biological role, in cooperation with other chaperones, Hsp70s are key components that facilitate folding of de novo synthesized proteins, assist translocation of precursor proteins into organelles, and are responsible for degradation of damaged protein under stress conditions. The sequence is that of Heat shock 70 kDa protein 8 (HSP70-8) from Arabidopsis thaliana (Mouse-ear cress).